The following is a 185-amino-acid chain: Cytidylate kinase (185 aa).

An ATP-binding site is contributed by 8–16 (GPPGSGKTT).

It belongs to the cytidylate kinase family. Type 2 subfamily.

It localises to the cytoplasm. It catalyses the reaction CMP + ATP = CDP + ADP. The enzyme catalyses dCMP + ATP = dCDP + ADP. This Desulfurococcus amylolyticus (strain DSM 18924 / JCM 16383 / VKM B-2413 / 1221n) (Desulfurococcus kamchatkensis) protein is Cytidylate kinase.